A 475-amino-acid chain; its full sequence is Sulfate adenylyltransferase subunit 1 (475 aa).

Positions 25-239 constitute a tr-type G domain; it reads KSLLRFLTCG…EVLETVEIQR (215 aa). The interval 34 to 41 is G1; it reads GSVDDGKS. 34–41 serves as a coordination point for GTP; it reads GSVDDGKS. Positions 92–96 are G2; it reads GITID. Residues 113-116 are G3; that stretch reads DTPG. Residues 113 to 117 and 168 to 171 each bind GTP; these read DTPGH and NKMD. The segment at 168–171 is G4; it reads NKMD. Positions 206 to 208 are G5; it reads SAL.

It belongs to the TRAFAC class translation factor GTPase superfamily. Classic translation factor GTPase family. CysN/NodQ subfamily. In terms of assembly, heterodimer composed of CysD, the smaller subunit, and CysN.

The catalysed reaction is sulfate + ATP + H(+) = adenosine 5'-phosphosulfate + diphosphate. Its pathway is sulfur metabolism; hydrogen sulfide biosynthesis; sulfite from sulfate: step 1/3. In terms of biological role, with CysD forms the ATP sulfurylase (ATPS) that catalyzes the adenylation of sulfate producing adenosine 5'-phosphosulfate (APS) and diphosphate, the first enzymatic step in sulfur assimilation pathway. APS synthesis involves the formation of a high-energy phosphoric-sulfuric acid anhydride bond driven by GTP hydrolysis by CysN coupled to ATP hydrolysis by CysD. This is Sulfate adenylyltransferase subunit 1 from Citrobacter koseri (strain ATCC BAA-895 / CDC 4225-83 / SGSC4696).